The chain runs to 534 residues: Membrane protein insertase YidC (534 aa).

Helical transmembrane passes span 7–27, 319–339, 342–362, 413–433, and 493–513; these read IIAVVLSFIVLVGWGYLSEYM, AIDLGWFGFIARPLVTLLDFF, YVGNYGTAIILLTILIKLVFW, GGCLPMLVQIPVFFGLYQALL, and VMMFMPVVFTFLFLNFPSGLV.

It belongs to the OXA1/ALB3/YidC family. Type 1 subfamily. As to quaternary structure, interacts with the Sec translocase complex via SecD. Specifically interacts with transmembrane segments of nascent integral membrane proteins during membrane integration.

The protein localises to the cell inner membrane. Its function is as follows. Required for the insertion and/or proper folding and/or complex formation of integral membrane proteins into the membrane. Involved in integration of membrane proteins that insert both dependently and independently of the Sec translocase complex, as well as at least some lipoproteins. Aids folding of multispanning membrane proteins. The polypeptide is Membrane protein insertase YidC (Nitratidesulfovibrio vulgaris (strain ATCC 29579 / DSM 644 / CCUG 34227 / NCIMB 8303 / VKM B-1760 / Hildenborough) (Desulfovibrio vulgaris)).